The chain runs to 91 residues: C-C motif chemokine 5 (91 aa).

An N-terminal signal peptide occupies residues 1–23 (MKVSAAALCVILTTAALCVPASA). 2 disulfides stabilise this stretch: Cys33–Cys57 and Cys34–Cys73.

It belongs to the intercrine beta (chemokine CC) family.

The protein resides in the secreted. In terms of biological role, chemoattractant for blood monocytes, memory T-helper cells and eosinophils. Causes the release of histamine from basophils and activates eosinophils. May activate several chemokine receptors including CCR1, CCR3, CCR4 and CCR5. May also be an agonist of the G protein-coupled receptor GPR75. Together with GPR75, may play a role in neuron survival through activation of a downstream signaling pathway involving the PI3, Akt and MAP kinases. By activating GPR75 may also play a role in insulin secretion by islet cells. The polypeptide is C-C motif chemokine 5 (CCL5) (Cavia porcellus (Guinea pig)).